Here is a 120-residue protein sequence, read N- to C-terminus: Large ribosomal subunit protein uL18 (120 aa).

This sequence belongs to the universal ribosomal protein uL18 family. In terms of assembly, part of the 50S ribosomal subunit; part of the 5S rRNA/L5/L18/L25 subcomplex. Contacts the 5S and 23S rRNAs.

This is one of the proteins that bind and probably mediate the attachment of the 5S RNA into the large ribosomal subunit, where it forms part of the central protuberance. The protein is Large ribosomal subunit protein uL18 of Beijerinckia indica subsp. indica (strain ATCC 9039 / DSM 1715 / NCIMB 8712).